The sequence spans 180 residues: Pituitary tumor-transforming gene 1 protein-interacting protein (180 aa).

Positions 1–32 are cleaved as a signal peptide; it reads MAPGVARGPTPYWRLRLGGAALLLLLIPVAAA. At 33–96 the chain is on the extracellular side; that stretch reads QEPPGAACSQ…RWGVCWVNFE (64 aa). In terms of domain architecture, PSI spans 39-92; that stretch reads ACSQNTNKTCEECLKNVSCLWCNTNKACLDYPVTSVLPPASLCKLSSARWGVCW. Residues asparagine 45 and asparagine 54 are each glycosylated (N-linked (GlcNAc...) asparagine). A helical transmembrane segment spans residues 97–117; the sequence is ALIITMSVVGGTLLLGIAICC. Residues 118–180 lie on the Cytoplasmic side of the membrane; that stretch reads CCCCRRKRSR…ENPYARFENN (63 aa). Positions 130-165 form a coiled coil; the sequence is DRSEEKAMREREERRIRQEERRAEMKTRHDEIRKKY. The tract at residues 131–157 is disordered; it reads RSEEKAMREREERRIRQEERRAEMKTR. Phosphotyrosine is present on tyrosine 174.

Interacts with PTTG1. As to expression, ubiquitous.

It is found in the membrane. Its subcellular location is the cytoplasm. The protein localises to the nucleus. Functionally, may facilitate PTTG1 nuclear translocation. The chain is Pituitary tumor-transforming gene 1 protein-interacting protein (PTTG1IP) from Homo sapiens (Human).